A 913-amino-acid chain; its full sequence is E3 ubiquitin-protein ligase ZNRF3 (913 aa).

Positions 1–32 (MRPRSGGRPGAPGRRRRRLRRGPRGRRLPPPP) are disordered. The signal sequence occupies residues 1 to 52 (MRPRSGGRPGAPGRRRRRLRRGPRGRRLPPPPPLPLLLGLLLAAAGPGAARA). Residues 13–27 (GRRRRRLRRGPRGRR) are compositionally biased toward basic residues. Residues 53–216 (KETAFVEVVL…PRQPTEYFDM (164 aa)) lie on the Extracellular side of the membrane. A helical membrane pass occupies residues 217-237 (GIFLAFFVVVSLVCLILLVKI). Topologically, residues 238–913 (KLKQRRSQNS…GSGPGIGTGA (676 aa)) are cytoplasmic. The RING-type; atypical zinc finger occupies 290–331 (CAICLEKYIDGEELRVIPCTHRFHRKCVDPWLLQHHTCPHCR). Disordered stretches follow at residues 601–669 (AVHL…GLEV) and 855–913 (REEE…GTGA). 2 stretches are compositionally biased toward polar residues: residues 634 to 664 (SGDQ…STSE) and 881 to 890 (ASLSSAPQDT). A compositionally biased stretch (gly residues) spans 903–913 (PGSGPGIGTGA).

This sequence belongs to the ZNRF3 family. Interacts with LRP6, FZD4, FZD5, FZD6 and FZD8. Interacts with RSPO1; interaction promotes indirect interaction with LGR4 and membrane clearance of ZNRF3. Interacts with LMBR1L.

The protein resides in the cell membrane. It carries out the reaction S-ubiquitinyl-[E2 ubiquitin-conjugating enzyme]-L-cysteine + [acceptor protein]-L-lysine = [E2 ubiquitin-conjugating enzyme]-L-cysteine + N(6)-ubiquitinyl-[acceptor protein]-L-lysine.. It functions in the pathway protein modification; protein ubiquitination. Its activity is regulated as follows. Negatively regulated by R-spondin proteins such as RSPO1: interaction with RSPO1 induces the indirect association between ZNRF3 and LGR4, promoting membrane clearance of ZNRF3. E3 ubiquitin-protein ligase that acts as a negative regulator of the Wnt signaling pathway by mediating the ubiquitination and subsequent degradation of Wnt receptor complex components Frizzled and LRP6. Acts on both canonical and non-canonical Wnt signaling pathway. Acts as a tumor suppressor in the intestinal stem cell zone by inhibiting the Wnt signaling pathway, thereby restricting the size of the intestinal stem cell zone. Along with RSPO2 and RNF43, constitutes a master switch that governs limb specification. The polypeptide is E3 ubiquitin-protein ligase ZNRF3 (Znrf3) (Mus musculus (Mouse)).